We begin with the raw amino-acid sequence, 753 residues long: Photosystem I P700 chlorophyll a apoprotein A1 (753 aa).

8 helical membrane-spanning segments follow: residues 73 to 96 (IFSAHFGQLAIIFIWLSGMYYHGA), 159 to 182 (LYCTAIGALIFAALMLFAGWFHYH), 198 to 222 (LNHHLAGLLGLGSLSWAGHQIHVSL), 294 to 312 (TAHHHLAIAVLFLIAGHMY), 349 to 372 (WHAQLAVNLAMLGSLTIVVAHHMY), 388 to 414 (LSLFTHHMWIGGFIIVGAAAHAAIFMV), 436 to 458 (AIVSHLNWVCIFLGFHSFGLYIH), and 534 to 552 (FLVHHIHAFTIHVTVLILL). Cys576 and Cys585 together coordinate [4Fe-4S] cluster. A run of 2 helical transmembrane segments spans residues 592-613 (HVFLGLFWMYNAISVVIFHFSW) and 667-689 (LSAYGLLFLGAHFVWAFSLMFLF). Residue His678 coordinates chlorophyll a'. 2 residues coordinate chlorophyll a: Met686 and Tyr694. Trp695 lines the phylloquinone pocket. The helical transmembrane segment at 727–747 (AVGVAHYLLGGIVTTWAFFLA) threads the bilayer.

Belongs to the PsaA/PsaB family. In terms of assembly, the PsaA/B heterodimer binds the P700 chlorophyll special pair and subsequent electron acceptors. PSI consists of a core antenna complex that captures photons, and an electron transfer chain that converts photonic excitation into a charge separation. The eukaryotic PSI reaction center is composed of at least 11 subunits. P700 is a chlorophyll a/chlorophyll a' dimer, A0 is one or more chlorophyll a, A1 is one or both phylloquinones and FX is a shared 4Fe-4S iron-sulfur center. serves as cofactor.

It localises to the plastid. The protein resides in the chloroplast thylakoid membrane. It catalyses the reaction reduced [plastocyanin] + hnu + oxidized [2Fe-2S]-[ferredoxin] = oxidized [plastocyanin] + reduced [2Fe-2S]-[ferredoxin]. PsaA and PsaB bind P700, the primary electron donor of photosystem I (PSI), as well as the electron acceptors A0, A1 and FX. PSI is a plastocyanin-ferredoxin oxidoreductase, converting photonic excitation into a charge separation, which transfers an electron from the donor P700 chlorophyll pair to the spectroscopically characterized acceptors A0, A1, FX, FA and FB in turn. Oxidized P700 is reduced on the lumenal side of the thylakoid membrane by plastocyanin. The protein is Photosystem I P700 chlorophyll a apoprotein A1 of Pinus thunbergii (Japanese black pine).